The chain runs to 30 residues: Alpha-defensin PhD-4 (30 aa).

3 cysteine pairs are disulfide-bonded: cysteine 2/cysteine 30, cysteine 4/cysteine 19, and cysteine 9/cysteine 29.

The protein resides in the secreted. In terms of biological role, in low salt conditions, has antibacterial activity against the Gram-negative bacterium E.coli ML35p (MIC=2.4 uM), the Gram-positive bacteria L.monocytogenes EGD (MIC=2.2 uM) and methicillin-resistant S.aureus ATCC 33591 (MIC=3.5 uM), and the fungus C.albicans 820 (MIC=3.9 uM). At high physiological salt concentrations the antimicrobial activity decreases significantly: E.coli ML35p (MIC=7.1 uM), L.monocytogenes EGD (MIC=1.8 uM), S.aureus ATCC 33591 (MIC=&gt;50 uM), and C.albicans 820 (MIC=&gt;50 uM). This Papio hamadryas (Hamadryas baboon) protein is Alpha-defensin PhD-4.